The sequence spans 82 residues: Small ribosomal subunit protein uS17 (82 aa).

It belongs to the universal ribosomal protein uS17 family. In terms of assembly, part of the 30S ribosomal subunit.

Its function is as follows. One of the primary rRNA binding proteins, it binds specifically to the 5'-end of 16S ribosomal RNA. This is Small ribosomal subunit protein uS17 from Shewanella halifaxensis (strain HAW-EB4).